We begin with the raw amino-acid sequence, 365 residues long: 2-aminoethylphosphonate--pyruvate transaminase (365 aa).

Lys194 is modified (N6-(pyridoxal phosphate)lysine).

This sequence belongs to the class-V pyridoxal-phosphate-dependent aminotransferase family. PhnW subfamily. As to quaternary structure, homodimer. The cofactor is pyridoxal 5'-phosphate.

It carries out the reaction (2-aminoethyl)phosphonate + pyruvate = phosphonoacetaldehyde + L-alanine. Functionally, involved in phosphonate degradation. In Bacillus cereus (strain ATCC 14579 / DSM 31 / CCUG 7414 / JCM 2152 / NBRC 15305 / NCIMB 9373 / NCTC 2599 / NRRL B-3711), this protein is 2-aminoethylphosphonate--pyruvate transaminase.